Here is a 46-residue protein sequence, read N- to C-terminus: Large ribosomal subunit protein bL34c (46 aa).

A disordered region spans residues 1 to 46 (MSKRTLEGSHRKKVRKSGFLSRSQSPTGRRILKARRKKGRKMLVKY). The segment covering 30 to 46 (RILKARRKKGRKMLVKY) has biased composition (basic residues).

It belongs to the bacterial ribosomal protein bL34 family.

It is found in the plastid. The protein localises to the cyanelle. The protein is Large ribosomal subunit protein bL34c (rpl34) of Cyanophora paradoxa.